Here is a 434-residue protein sequence, read N- to C-terminus: Asparagine--tRNA ligase (434 aa).

The protein belongs to the class-II aminoacyl-tRNA synthetase family.

The protein resides in the cytoplasm. It carries out the reaction tRNA(Asn) + L-asparagine + ATP = L-asparaginyl-tRNA(Asn) + AMP + diphosphate + H(+). The polypeptide is Asparagine--tRNA ligase (asnS) (Pyrococcus furiosus (strain ATCC 43587 / DSM 3638 / JCM 8422 / Vc1)).